The chain runs to 781 residues: Lon protease (781 aa).

A Lon N-terminal domain is found at 16-214 (ANVLVTRGIV…KILSFTIDER (199 aa)). Residue 365-372 (GPPGVGKT) coordinates ATP. Residues 601 to 781 (EYMPGVVNGM…YDDVYNRLFK (181 aa)) enclose the Lon proteolytic domain. Catalysis depends on residues Ser688 and Lys731.

The protein belongs to the peptidase S16 family. In terms of assembly, homohexamer. Organized in a ring with a central cavity.

The protein localises to the cytoplasm. The catalysed reaction is Hydrolysis of proteins in presence of ATP.. Its function is as follows. ATP-dependent serine protease that mediates the selective degradation of mutant and abnormal proteins as well as certain short-lived regulatory proteins. Required for cellular homeostasis and for survival from DNA damage and developmental changes induced by stress. Degrades polypeptides processively to yield small peptide fragments that are 5 to 10 amino acids long. Binds to DNA in a double-stranded, site-specific manner. The protein is Lon protease of Malacoplasma penetrans (strain HF-2) (Mycoplasma penetrans).